The sequence spans 138 residues: Ribosome-binding factor A (138 aa).

Belongs to the RbfA family. In terms of assembly, monomer. Binds 30S ribosomal subunits, but not 50S ribosomal subunits or 70S ribosomes.

It localises to the cytoplasm. Functionally, one of several proteins that assist in the late maturation steps of the functional core of the 30S ribosomal subunit. Associates with free 30S ribosomal subunits (but not with 30S subunits that are part of 70S ribosomes or polysomes). Required for efficient processing of 16S rRNA. May interact with the 5'-terminal helix region of 16S rRNA. The sequence is that of Ribosome-binding factor A from Sodalis glossinidius (strain morsitans).